Here is a 763-residue protein sequence, read N- to C-terminus: Phosphoglycerol transferase I (763 aa).

The next 4 helical transmembrane spans lie at 1–21 (MSEL…AWKA), 26–46 (WWFA…ITLF), 77–97 (ILPG…LGWI), and 108–128 (FGYS…SPAF).

It belongs to the OpgB family.

The protein resides in the cell inner membrane. It catalyses the reaction a phosphatidylglycerol + a membrane-derived-oligosaccharide D-glucose = a 1,2-diacyl-sn-glycerol + a membrane-derived-oligosaccharide 6-(glycerophospho)-D-glucose.. It participates in glycan metabolism; osmoregulated periplasmic glucan (OPG) biosynthesis. In terms of biological role, transfers a phosphoglycerol residue from phosphatidylglycerol to the membrane-bound nascent glucan backbones. The chain is Phosphoglycerol transferase I from Escherichia coli O139:H28 (strain E24377A / ETEC).